The sequence spans 385 residues: Ethanolamine kinase 2 (385 aa).

The protein belongs to the choline/ethanolamine kinase family.

The catalysed reaction is ethanolamine + ATP = phosphoethanolamine + ADP + H(+). It participates in phospholipid metabolism; phosphatidylethanolamine biosynthesis; phosphatidylethanolamine from ethanolamine: step 1/3. In terms of biological role, highly specific for ethanolamine phosphorylation. Does not have choline kinase activity. The polypeptide is Ethanolamine kinase 2 (Etnk2) (Rattus norvegicus (Rat)).